A 1360-amino-acid polypeptide reads, in one-letter code: Probable inactive protein kinase DDB_G0270444 (1360 aa).

WD repeat units follow at residues 44–83 (SSKRPITFVIYDEEGNQFITGEDDFFIRLYNEDGTYIKQL), 109–152 (IRNI…AVYN), 166–205 (TTSAGITALTFDPTNLLVISGTSDGIVRKHSLRERVIMGT), and 208–247 (GHSRGAILNLLLTKHGHLLSSSMDRTIRLWDIDSGKQITG). The Protein kinase domain maps to 636 to 954 (EKSIQTYLSN…IEQALSHPFI (319 aa)). Residues 959-979 (KQQQQQQQQKQQQQQQQQQQQ) show a composition bias toward low complexity. 3 disordered regions span residues 959–989 (KQQQQQQQQKQQQQQQQQQQQEIIPKDDSLT), 1258–1311 (IISE…VEEE), and 1331–1360 (EVEEEIEVEEEIEVEEEIQVEDDTDKSNDF). Coiled-coil stretches lie at residues 1014 to 1269 (SKIK…QEGE) and 1297 to 1352 (NASD…QVED). The segment covering 1291 to 1300 (LERDNKNASD) has biased composition (basic and acidic residues). Composition is skewed to acidic residues over residues 1301–1311 (HDDEQQFVEEE) and 1331–1354 (EVEEEIEVEEEIEVEEEIQVEDDT).

This sequence belongs to the protein kinase superfamily. CMGC Ser/Thr protein kinase family.

This chain is Probable inactive protein kinase DDB_G0270444, found in Dictyostelium discoideum (Social amoeba).